A 105-amino-acid chain; its full sequence is Large ribosomal subunit protein bL21 (105 aa).

It belongs to the bacterial ribosomal protein bL21 family. Part of the 50S ribosomal subunit. Contacts protein L20.

Functionally, this protein binds to 23S rRNA in the presence of protein L20. The polypeptide is Large ribosomal subunit protein bL21 (Rhizobium rhizogenes (strain K84 / ATCC BAA-868) (Agrobacterium radiobacter)).